The sequence spans 425 residues: Tyrosine--tRNA ligase (425 aa).

Y37 provides a ligand contact to L-tyrosine. The 'HIGH' region motif lies at 42-51 (PTADSLHLGH). L-tyrosine contacts are provided by Y175 and Q179. The 'KMSKS' region signature appears at 235-239 (KFGKT). Residue K238 participates in ATP binding. The S4 RNA-binding domain maps to 357-414 (ADLQQALVSAELVPSRGQARTMISSNAVTINGEKQADPEYTFSASDRLFDRYTLLRRG).

The protein belongs to the class-I aminoacyl-tRNA synthetase family. TyrS type 1 subfamily. In terms of assembly, homodimer.

Its subcellular location is the cytoplasm. The enzyme catalyses tRNA(Tyr) + L-tyrosine + ATP = L-tyrosyl-tRNA(Tyr) + AMP + diphosphate + H(+). Its function is as follows. Catalyzes the attachment of tyrosine to tRNA(Tyr) in a two-step reaction: tyrosine is first activated by ATP to form Tyr-AMP and then transferred to the acceptor end of tRNA(Tyr). This chain is Tyrosine--tRNA ligase, found in Pectobacterium carotovorum subsp. carotovorum (strain PC1).